The primary structure comprises 434 residues: F-box only protein 15 (434 aa).

Residues 1-41 (MPSEILLKIFSYLDAVSLLCAGCVSRRFYHLANDNFIWIRI) enclose the F-box domain.

Directly interacts with SKP1 and CUL1.

Functionally, substrate-recognition component of the SCF (SKP1-CUL1-F-box protein)-type E3 ubiquitin ligase complex. This chain is F-box only protein 15 (FBXO15), found in Macaca fascicularis (Crab-eating macaque).